The following is a 413-amino-acid chain: Metacaspase-1A (413 aa).

Positions 1–104 (MQNHHHQQSS…PTDPVAFGHG (104 aa)) are disordered. The span at 36–47 (SPQPGYGAPPPH) shows a compositional bias: pro residues. Over residues 49-58 (GYGQPPSGYG) the composition is skewed to low complexity. Over residues 75–85 (GMNQYQNTYSH) the composition is skewed to polar residues. Active-site residues include His204 and Cys260.

It belongs to the peptidase C14B family.

Functionally, involved in cell death (apoptosis). Required for the apoptotic-like loss of membrane phospholipid asymmetry at stationary phase and facilitates growth under conditions of endoplasmic reticulum stress. The protein is Metacaspase-1A (casA) of Aspergillus fumigatus (strain CBS 144.89 / FGSC A1163 / CEA10) (Neosartorya fumigata).